We begin with the raw amino-acid sequence, 721 residues long: Ophiobolin F synthase oblA (721 aa).

The segment at 5-325 is (7Z)-ophiobola-7,19-dien-3-ol synthase; it reads YDQPYSVLLD…RYNLKAEWNE (321 aa). Mg(2+) is bound by residues aspartate 97 and aspartate 101. Aspartate 97 is a substrate binding site. The DDXXD 1 motif lies at 97 to 101; the sequence is DDVID. Substrate is bound by residues 185–188, asparagine 229, 233–237, and 316–317; these read RSLD, SFEKE, and RY. An NSE/DTE motif is present at residues 229–237; that stretch reads NDLFSFEKE. The geranylfarnesyl diphosphate synthase stretch occupies residues 326 to 721; the sequence is LQMLRAKHGV…LRLMMEMLKV (396 aa). The tract at residues 348–387 is disordered; the sequence is SMDHIWKKGSTQGESKGEKRKRQSVNGTNGVNGTNGVKKP. The segment covering 372–384 has biased composition (low complexity); sequence VNGTNGVNGTNGV. Isopentenyl diphosphate contacts are provided by lysine 432, arginine 435, and histidine 464. Aspartate 471 and aspartate 475 together coordinate Mg(2+). Positions 471 to 475 match the DDXXD 2 motif; the sequence is DDLED. Arginine 480 is a binding site for dimethylallyl diphosphate. An isopentenyl diphosphate-binding site is contributed by arginine 481. Dimethylallyl diphosphate contacts are provided by lysine 558, threonine 559, glutamine 597, asparagine 604, lysine 614, and lysine 624.

This sequence in the N-terminal section; belongs to the terpene synthase family. The protein in the C-terminal section; belongs to the FPP/GGPP synthase family. It depends on Mg(2+) as a cofactor.

The catalysed reaction is isopentenyl diphosphate + (2E,6E)-farnesyl diphosphate = (2E,6E,10E)-geranylgeranyl diphosphate + diphosphate. The enzyme catalyses isopentenyl diphosphate + (2E,6E,10E)-geranylgeranyl diphosphate = (2E,6E,10E,14E)-geranylfarnesyl diphosphate + diphosphate. It catalyses the reaction (2E,6E,10E,14E)-geranylfarnesyl diphosphate + H2O = ophiobolin F + diphosphate. It participates in secondary metabolite biosynthesis; terpenoid biosynthesis. Functionally, bifunctional sesterterpene synthase; part of the gene cluster that mediates the biosynthesis of the sesterterpenes ophiobolins, fungal phytotoxins with potential anti-cancer activities. The first step of the pathway is performed by the sesterterpene synthase oblA that possesses both prenyl transferase and terpene cyclase activity, converting isopentenyl diphosphate and dimethylallyl diphosphate into geranylfarnesyl diphosphate (GFPP) and further converting GFPP into ophiobolin F, respectively. Other sesterterpenoids (C(25) terpenoids) are found as minor products of oblA. The cytochrome P450 monooxygenase oblB then catalyzes a four-step oxidative transformation of ophiobolin F to yield ophiobolin C. The FAD-dependent oxidoreductase oblC might be involved in a later oxidation step that produces ophiobolin A. The chain is Ophiobolin F synthase oblA from Cochliobolus heterostrophus (strain C5 / ATCC 48332 / race O) (Southern corn leaf blight fungus).